The chain runs to 59 residues: Small, acid-soluble spore protein H 2 (59 aa).

This sequence belongs to the SspH family.

It is found in the spore core. The sequence is that of Small, acid-soluble spore protein H 2 from Geobacillus kaustophilus (strain HTA426).